Reading from the N-terminus, the 1177-residue chain is DNA-directed RNA polymerase subunit beta' (1177 aa).

Residues Cys60, Cys62, Cys75, and Cys78 each coordinate Zn(2+). The Mg(2+) site is built by Asp450, Asp452, and Asp454. Zn(2+) is bound by residues Cys795, Cys869, Cys876, and Cys879.

It belongs to the RNA polymerase beta' chain family. In terms of assembly, the RNAP catalytic core consists of 2 alpha, 1 beta, 1 beta' and 1 omega subunit. When a sigma factor is associated with the core the holoenzyme is formed, which can initiate transcription. Mg(2+) is required as a cofactor. Requires Zn(2+) as cofactor.

The catalysed reaction is RNA(n) + a ribonucleoside 5'-triphosphate = RNA(n+1) + diphosphate. DNA-dependent RNA polymerase catalyzes the transcription of DNA into RNA using the four ribonucleoside triphosphates as substrates. This chain is DNA-directed RNA polymerase subunit beta', found in Clostridium botulinum (strain Eklund 17B / Type B).